A 283-amino-acid chain; its full sequence is Phosphate import ATP-binding protein PstB 1 (283 aa).

The segment covering 1–16 (MSSDDTTDPTADDESF) has biased composition (acidic residues). A disordered region spans residues 1–35 (MSSDDTTDPTADDESFTDSPVAGLEQSTTTRGSGR). Residues 38 to 278 (ISARNINVWY…PSSERVENYI (241 aa)) enclose the ABC transporter domain. 70-77 (GPSGCGKS) contacts ATP.

It belongs to the ABC transporter superfamily. Phosphate importer (TC 3.A.1.7) family. In terms of assembly, the complex is composed of two ATP-binding proteins (PstB), two transmembrane proteins (PstC and PstA) and a solute-binding protein (PstS).

It localises to the cell membrane. It catalyses the reaction phosphate(out) + ATP + H2O = ADP + 2 phosphate(in) + H(+). Part of the ABC transporter complex PstSACB involved in phosphate import. Responsible for energy coupling to the transport system. This chain is Phosphate import ATP-binding protein PstB 1, found in Natronomonas pharaonis (strain ATCC 35678 / DSM 2160 / CIP 103997 / JCM 8858 / NBRC 14720 / NCIMB 2260 / Gabara) (Halobacterium pharaonis).